We begin with the raw amino-acid sequence, 259 residues long: Small ribosomal subunit protein uS7m (259 aa).

The N-terminal 39 residues, 1 to 39, are a transit peptide targeting the mitochondrion; the sequence is MLRLIKQPLFRCASSGHLMKESLVFIHQTRTFQVGKFTS. The residue at position 157 (Thr-157) is a Phosphothreonine.

The protein belongs to the universal ribosomal protein uS7 family. Component of the mitochondrial small ribosomal subunit (mt-SSU). Mature yeast 74S mitochondrial ribosomes consist of a small (37S) and a large (54S) subunit. The 37S small subunit contains a 15S ribosomal RNA (15S mt-rRNA) and at least 32 different proteins. The 54S large subunit contains a 21S rRNA (21S mt-rRNA) and at least 45 different proteins.

It localises to the mitochondrion. Functionally, component of the mitochondrial ribosome (mitoribosome), a dedicated translation machinery responsible for the synthesis of mitochondrial genome-encoded proteins, including at least some of the essential transmembrane subunits of the mitochondrial respiratory chain. The mitoribosomes are attached to the mitochondrial inner membrane and translation products are cotranslationally integrated into the membrane. The sequence is that of Small ribosomal subunit protein uS7m (rsm7) from Schizosaccharomyces pombe (strain 972 / ATCC 24843) (Fission yeast).